Here is a 145-residue protein sequence, read N- to C-terminus: Peptide methionine sulfoxide reductase MsrB (145 aa).

A MsrB domain is found at 4 to 127; the sequence is KEELRQRIGD…NSAALKFIPY (124 aa). The active-site Nucleophile is the cysteine 116.

The protein belongs to the MsrB Met sulfoxide reductase family.

It catalyses the reaction L-methionyl-[protein] + [thioredoxin]-disulfide + H2O = L-methionyl-(R)-S-oxide-[protein] + [thioredoxin]-dithiol. The polypeptide is Peptide methionine sulfoxide reductase MsrB (Streptococcus equi subsp. zooepidemicus (strain H70)).